Consider the following 230-residue polypeptide: Large ribosomal subunit protein uL1 (230 aa).

Belongs to the universal ribosomal protein uL1 family. As to quaternary structure, part of the 50S ribosomal subunit.

Binds directly to 23S rRNA. The L1 stalk is quite mobile in the ribosome, and is involved in E site tRNA release. Its function is as follows. Protein L1 is also a translational repressor protein, it controls the translation of the L11 operon by binding to its mRNA. The polypeptide is Large ribosomal subunit protein uL1 (Desulfitobacterium hafniense (strain DSM 10664 / DCB-2)).